The chain runs to 155 residues: Large ribosomal subunit protein uL22 (155 aa).

Belongs to the universal ribosomal protein uL22 family. As to quaternary structure, part of the 50S ribosomal subunit.

In terms of biological role, this protein binds specifically to 23S rRNA. It makes multiple contacts with different domains of the 23S rRNA in the assembled 50S subunit and ribosome. Functionally, the globular domain of the protein is located near the polypeptide exit tunnel on the outside of the subunit, while an extended beta-hairpin is found that lines the wall of the exit tunnel in the center of the 70S ribosome. The polypeptide is Large ribosomal subunit protein uL22 (Pyrococcus abyssi (strain GE5 / Orsay)).